Here is a 209-residue protein sequence, read N- to C-terminus: 2-phospho-L-lactate guanylyltransferase (209 aa).

This sequence belongs to the CofC family. In terms of assembly, homodimer.

The catalysed reaction is (2S)-2-phospholactate + GTP + H(+) = (2S)-lactyl-2-diphospho-5'-guanosine + diphosphate. Its pathway is cofactor biosynthesis; coenzyme F420 biosynthesis. Its function is as follows. Guanylyltransferase that catalyzes the activation of (2S)-2-phospholactate (2-PL) as (2S)-lactyl-2-diphospho-5'-guanosine, via the condensation of 2-PL with GTP. It is involved in the biosynthesis of coenzyme F420, a hydride carrier cofactor. The polypeptide is 2-phospho-L-lactate guanylyltransferase (Methanosphaerula palustris (strain ATCC BAA-1556 / DSM 19958 / E1-9c)).